A 280-amino-acid polypeptide reads, in one-letter code: 2-dehydro-3-deoxyphosphooctonate aldolase (280 aa).

It belongs to the KdsA family.

It localises to the cytoplasm. The catalysed reaction is D-arabinose 5-phosphate + phosphoenolpyruvate + H2O = 3-deoxy-alpha-D-manno-2-octulosonate-8-phosphate + phosphate. The protein operates within carbohydrate biosynthesis; 3-deoxy-D-manno-octulosonate biosynthesis; 3-deoxy-D-manno-octulosonate from D-ribulose 5-phosphate: step 2/3. It functions in the pathway bacterial outer membrane biogenesis; lipopolysaccharide biosynthesis. This is 2-dehydro-3-deoxyphosphooctonate aldolase from Desulfotalea psychrophila (strain LSv54 / DSM 12343).